The following is a 155-amino-acid chain: Large ribosomal subunit protein uL13 (155 aa).

It belongs to the universal ribosomal protein uL13 family. In terms of assembly, part of the 50S ribosomal subunit.

In terms of biological role, this protein is one of the early assembly proteins of the 50S ribosomal subunit, although it is not seen to bind rRNA by itself. It is important during the early stages of 50S assembly. The polypeptide is Large ribosomal subunit protein uL13 (Aeropyrum pernix (strain ATCC 700893 / DSM 11879 / JCM 9820 / NBRC 100138 / K1)).